Here is a 211-residue protein sequence, read N- to C-terminus: Regulator of G-protein signaling 2 (211 aa).

2 disordered regions span residues Gly-14–Met-33 and Leu-49–Lys-71. The segment at Lys-32–Gln-66 is necessary for membrane association. The tract at residues Leu-79 to Cys-116 is necessary to inhibit protein synthesis. Positions Ala-83–Cys-199 constitute an RGS domain.

Interacts with GNAQ. Does not interact with GNAI1 and GNAI3. Interacts with EIF2B5. Interacts with PRKG1 (isoform alpha). In terms of processing, phosphorylated by protein kinase C. Phosphorylation by PRKG1 leads to activation of RGS2 activity.

The protein localises to the cell membrane. It is found in the cytoplasm. Its subcellular location is the nucleus. The protein resides in the nucleolus. Regulates G protein-coupled receptor signaling cascades. Inhibits signal transduction by increasing the GTPase activity of G protein alpha subunits, thereby driving them into their inactive GDP-bound form. It is involved in the negative regulation of the angiotensin-activated signaling pathway. Plays a role in the regulation of blood pressure in response to signaling via G protein-coupled receptors and GNAQ. Plays a role in regulating the constriction and relaxation of vascular smooth muscle. Binds EIF2B5 and blocks its activity, thereby inhibiting the translation of mRNA into protein. The chain is Regulator of G-protein signaling 2 (RGS2) from Bos taurus (Bovine).